Reading from the N-terminus, the 62-residue chain is Chromatin protein Cren7 (62 aa).

It belongs to the Cren7 family. In terms of assembly, monomer. Post-translationally, methylated at multiple sites, to varying extents.

It is found in the chromosome. Its subcellular location is the cytoplasm. Functionally, a chromatin protein, binds double-stranded DNA without sequence specificity. Constrains negative DNA supercoils. The protein is Chromatin protein Cren7 of Staphylothermus marinus (strain ATCC 43588 / DSM 3639 / JCM 9404 / F1).